Consider the following 321-residue polypeptide: Ubiquitin-conjugating enzyme E2 U (321 aa).

In terms of domain architecture, UBC core spans 4–153; that stretch reads RAYLLLHRDF…LRLFNRPLQM (150 aa). Cysteine 89 serves as the catalytic Glycyl thioester intermediate. Residues 285–321 form a disordered region; that stretch reads WKSDTSLYENDTDEPREEEVEDLISWTNTLNTNTSED. Residues 294–306 are compositionally biased toward acidic residues; it reads NDTDEPREEEVED. Over residues 309–321 the composition is skewed to polar residues; sequence SWTNTLNTNTSED.

The protein belongs to the ubiquitin-conjugating enzyme family. In terms of processing, autoubiquitinated in vitro in the presence of UBR5.

The enzyme catalyses S-ubiquitinyl-[E1 ubiquitin-activating enzyme]-L-cysteine + [E2 ubiquitin-conjugating enzyme]-L-cysteine = [E1 ubiquitin-activating enzyme]-L-cysteine + S-ubiquitinyl-[E2 ubiquitin-conjugating enzyme]-L-cysteine.. It participates in protein modification; protein ubiquitination. Catalyzes the covalent attachment of ubiquitin to other proteins. In Homo sapiens (Human), this protein is Ubiquitin-conjugating enzyme E2 U (UBE2U).